We begin with the raw amino-acid sequence, 76 residues long: Large ribosomal subunit protein uL24 (76 aa).

The protein belongs to the universal ribosomal protein uL24 family. As to quaternary structure, part of the 50S ribosomal subunit.

Functionally, one of two assembly initiator proteins, it binds directly to the 5'-end of the 23S rRNA, where it nucleates assembly of the 50S subunit. Its function is as follows. One of the proteins that surrounds the polypeptide exit tunnel on the outside of the subunit. The protein is Large ribosomal subunit protein uL24 of Campylobacter hominis (strain ATCC BAA-381 / DSM 21671 / CCUG 45161 / LMG 19568 / NCTC 13146 / CH001A).